Consider the following 907-residue polypeptide: MESAIAEGGASRFSASSGGGGSRGAPQHYPKTAGNSEFLGKTPGQNAQKWIPARSTRRDDNSAANNSANEKERHDAIFRKVRGILNKLTPEKFDKLCLELLNVGVESKLILKGVILLIVDKALEEPKYSSLYAQLCLRLAEDAPNFDGPAAEGQPGQKQSTTFRRLLISKLQDEFENRTRNVDVYDKRENPLLPEEEEQRAIAKIKMLGNIKFIGELGKLDLIHESILHKCIKTLLEKKKRVQLKDMGEDLECLCQIMRTVGPRLDHERAKSLMDQYFARMCSLMLSKELPARIRFLLQDTVELREHHWVPRKAFLDNGPKTINQIRQDAVKDLGVFIPAPMAQGMRSDFFLEGPFMPPRMKMDRDPLGGLADMFGQMPGSGIGTGPGVIQDRFSPTMGRHRSNQLFNGHGGHIMPPTQSQFGEMGGKFMKSQGLSQLYHNQSQGLLSQLQGQSKDMPPRFSKKGQLNADEISLRPAQSFLMNKNQVPKLQPQITMIPPSAQPPRTQTPPLGQTPQLGLKTNPPLIQEKPAKTSKKPPPSKEELLKLTETVVTEYLNSGNANEAVNGVREMRAPKHFLPEMLSKVIILSLDRSDEDKEKASSLISLLKQEGIATSDNFMQAFLNVLDQCPKLEVDIPLVKSYLAQFAARAIISELVSISELAQPLESGTHFPLFLLCLQQLAKLQDREWLTELFQQSKVNMQKMLPEIDQNKDRMLEILEGKGLSFLFPLLKLEKELLKQIKLDPSPQTIYKWIKDNISPKLHVDKGFVNILMTSFLQYISSEVNPPSDETDSSSAPSKEQLEQEKQLLLSFKPVMQKFLHDHVDLQVSALYALQVHCYNSNFPKGMLLRFFVHFYDMEIIEEEAFLAWKEDITQEFPGKGKALFQVNQWLTWLETAEEEESEEEAD.

The residue at position 1 (methionine 1) is an N-acetylmethionine. Residues 1 to 71 (MESAIAEGGA…SAANNSANEK (71 aa)) are disordered. Serine 11 is subject to Phosphoserine. Residues 78–308 (FRKVRGILNK…QDTVELREHH (231 aa)) enclose the MIF4G domain. Threonine 89 carries the phosphothreonine modification. Arginine 360 carries the post-translational modification Omega-N-methylarginine. At serine 395 the chain carries Phosphoserine. The residue at position 431 (lysine 431) is an N6-methyllysine. Residue serine 443 is modified to Phosphoserine. A disordered region spans residues 498 to 541 (PPSAQPPRTQTPPLGQTPQLGLKTNPPLIQEKPAKTSKKPPPSK). Over residues 503–516 (PPRTQTPPLGQTPQ) the composition is skewed to polar residues. At arginine 505 the chain carries Omega-N-methylarginine. Threonine 508 and threonine 514 each carry phosphothreonine. The MI domain maps to 543–666 (ELLKLTETVV…SISELAQPLE (124 aa)). Lysine 575 is covalently cross-linked (Glycyl lysine isopeptide (Lys-Gly) (interchain with G-Cter in SUMO2)). In terms of domain architecture, W2 spans 720-904 (EGKGLSFLFP…ETAEEEESEE (185 aa)). Serine 902 carries the phosphoserine modification.

The protein belongs to the eukaryotic initiation factor 4G family. In terms of assembly, interacts with the serine/threonine protein kinases MKNK1 and MKNK2. Binds EIF4A and EIF3. Interacts with MIF4GD. Interacts with DAZAP2. Phosphorylation; hyperphosphorylated during mitosis.

Functionally, appears to play a role in the switch from cap-dependent to IRES-mediated translation during mitosis, apoptosis and viral infection. Cleaved by some caspases and viral proteases. This Bos taurus (Bovine) protein is Eukaryotic translation initiation factor 4 gamma 2 (EIF4G2).